The following is a 312-amino-acid chain: Zinc transporter ZitB (312 aa).

The next 6 helical transmembrane spans lie at 16 to 36 (LLIA…GGWL), 40 to 60 (LALL…FIAL), 81 to 101 (LTTL…ILIV), 117 to 137 (TPML…FWIL), 153 to 173 (LHVL…IVIL), and 177 to 197 (WTPI…RSAW).

The protein belongs to the cation diffusion facilitator (CDF) transporter (TC 2.A.4) family. SLC30A subfamily.

The protein resides in the cell inner membrane. Functionally, involved in zinc efflux across the cytoplasmic membrane, thus reducing zinc accumulation in the cytoplasm and rendering bacteria more resistant to zinc. It may contribute to zinc homeostasis at low concentrations of zinc. The protein is Zinc transporter ZitB of Yersinia pestis.